The chain runs to 931 residues: MRKGLRATAARCGLGLGYLLQMLVLPALALLSASGTGSAAQDDDFFHELPETFPSDPPEPLPHFLIEPEEAYIVKNKPVNLYCKASPATQIYFKCNSEWVHQKDHVVDERVDETSGLIVREVSIEISRQQVEELFGPEDYWCQCVAWSSAGTTKSRKAYVRIAYLRKTFEQEPLGKEVSLEQEVLLQCRPPEGIPMAEVEWLKNEDIIDPVEDRNFYITIDHNLIIKQARLSDTANYTCVAKNIVAKRKSTTATVIVYVNGGWSTWAEWSVCNSRCGRGYQKRTRTCTNPAPLNGGAFCEGQSVQKIACTTLCPVDGRWTSWSKWSTCGTECTHWRRRECTAPAPKNGGKDCDGLVLQSKNCTDGLCMQAAPDSDDVALYVGIVIAVTVCLAITVVVALFVYRKNHRDFESNIIDSSALNGGFQPVNIKAARQDLLAVPPDLTSAAAMYRGPVYALHDVSDKIPMTNSPILDPLPNLKIKVYNSSGAVTPQDDLAEFSSKLSPQMTQSLLENEALNLKNQSLARQTDPSCTAFGTFNSLGGHLIIPNSGVSLLIPAGAIPQGRVYEMYVTVHRKENMRPPMEDSQTLLTPVVSCGPPGALLTRPVILTLHHCADPNTEDWKIQLKNQAVQGQWEDVVVVGEENFTTPCYIQLDAEACHILTENLSTYALVGQSTTKAAAKRLKLAIFGPLCCSSLEYSIRVYCLDDTQDALKEVLQLERQMGGQLLEEPKALHFKGSIHNLRLSIHDITHSLWKSKLLAKYQEIPFYHIWSGSQRNLHCTFTLERLSLNTVELVCKLCVRQVEGEGQIFQLNCTVSEEPTGIDLPLLDPASTITTVTGPSAFSIPLPIRQKLCSSLDAPQTRGHDWRMLAHKLNLDRYLNYFATKSSPTGVILDLWEAQNFPDGNLSMLAAVLEEMGRHETVVSLAAEGQY.

Positions Met-1 to Ala-40 are cleaved as a signal peptide. The Extracellular portion of the chain corresponds to Gln-41–Tyr-380. The 98-residue stretch at Pro-62–Tyr-159 folds into the Ig-like domain. 9 cysteine pairs are disulfide-bonded: Cys-83/Cys-144, Cys-95/Cys-142, Cys-188/Cys-239, Cys-272/Cys-309, Cys-276/Cys-313, Cys-287/Cys-299, Cys-328/Cys-362, Cys-332/Cys-367, and Cys-340/Cys-352. The Ig-like C2-type domain occupies Arg-161–Ile-256. Asn-236 carries N-linked (GlcNAc...) asparagine glycosylation. 2 TSP type-1 domains span residues Asn-260–Pro-314 and Asp-316–Met-368. Asn-361 carries N-linked (GlcNAc...) asparagine glycosylation. Residues Val-381–Val-401 traverse the membrane as a helical segment. Residues Tyr-402 to Tyr-931 are Cytoplasmic-facing. Positions Tyr-402–Tyr-931 are required for netrin-mediated axon repulsion of neuronal growth cones. The residue at position 502 (Ser-502) is a Phosphoserine. One can recognise a ZU5 domain in the interval Cys-530–Ser-673. Phosphotyrosine is present on Tyr-568. Residues Ser-694–Lys-712 are interaction with DCC. The 80-residue stretch at Gln-850–Gly-929 folds into the Death domain.

It belongs to the unc-5 family. As to quaternary structure, interacts with DCC (via cytoplasmic domain). Interacts (tyrosine phosphorylated form) with PTPN11. Interacts (via extracellular domain) with FLRT3 (via extracellular domain). Interacts (via Ig-like C2-type domain) with DSCAM (via extracellular domain). Interacts (via death domain) with DAPK1. Interacts (via cytoplasmic domain) with TUBB3; this interaction is decreased by NTN1/Netrin-1. In terms of processing, proteolytically cleaved by caspases during apoptosis. The cleavage does not take place when the receptor is associated with netrin ligand. Its cleavage by caspases is required to induce apoptosis. Post-translationally, phosphorylated on different cytoplasmic tyrosine residues. Phosphorylation of Tyr-568 leads to an interaction with PTPN11 phosphatase, suggesting that its activity is regulated by phosphorylation/dephosphorylation. Tyrosine phosphorylation is netrin-dependent. As to expression, detected in brain (at protein level). Mainly expressed in brain. Also expressed in kidney. Not expressed in developing or adult lung.

Its subcellular location is the cell membrane. The protein resides in the cell surface. It is found in the synapse. The protein localises to the synaptosome. It localises to the cell projection. Its subcellular location is the axon. The protein resides in the dendrite. It is found in the growth cone. The protein localises to the lamellipodium. It localises to the filopodium. Its function is as follows. Receptor for netrin required for axon guidance. Mediates axon repulsion of neuronal growth cones in the developing nervous system upon ligand binding. NTN1/Netrin-1 binding might cause dissociation of UNC5C from polymerized TUBB3 in microtubules and thereby lead to increased microtubule dynamics and axon repulsion. Axon repulsion in growth cones may also be caused by its association with DCC that may trigger signaling for repulsion. Might also collaborate with DSCAM in NTN1-mediated axon repulsion independently of DCC. Also involved in corticospinal tract axon guidance independently of DCC. Involved in dorsal root ganglion axon projection towards the spinal cord. It also acts as a dependence receptor required for apoptosis induction when not associated with netrin ligand. This is Netrin receptor UNC5C (Unc5c) from Rattus norvegicus (Rat).